Reading from the N-terminus, the 695-residue chain is Threonine--tRNA ligase (695 aa).

A TGS domain is found at 1–66 (MSAPARPAPA…DTDVEVTPVA (66 aa)). Positions 263 to 569 (DHRKLGVELD…LTEHYAGAFP (307 aa)) are catalytic. Positions 368, 419, and 546 each coordinate Zn(2+).

This sequence belongs to the class-II aminoacyl-tRNA synthetase family. As to quaternary structure, homodimer. Requires Zn(2+) as cofactor.

It is found in the cytoplasm. It catalyses the reaction tRNA(Thr) + L-threonine + ATP = L-threonyl-tRNA(Thr) + AMP + diphosphate + H(+). Functionally, catalyzes the attachment of threonine to tRNA(Thr) in a two-step reaction: L-threonine is first activated by ATP to form Thr-AMP and then transferred to the acceptor end of tRNA(Thr). Also edits incorrectly charged L-seryl-tRNA(Thr). This chain is Threonine--tRNA ligase, found in Mycolicibacterium gilvum (strain PYR-GCK) (Mycobacterium gilvum (strain PYR-GCK)).